The primary structure comprises 348 residues: Growth-regulating factor 5 (348 aa).

In terms of domain architecture, QLQ spans 24-59 (VFTAAQWAELEQQALIYKYLVAGVPVPGDLLLPIRP). 2 consecutive short sequence motifs (bipartite nuclear localization signal) follow at residues 94–112 (KKLD…KKWR) and 130–137 (RGRNRSRK). The WRC domain maps to 97 to 141 (DPEPWRCRRTDGKKWRCSKEAHPDSKYCERHMHRGRNRSRKPVES). Disordered stretches follow at residues 125–165 (ERHM…HDTD) and 306–348 (LRPF…PRCD). Residues 127-136 (HMHRGRNRSR) show a composition bias toward basic residues. Over residues 148–161 (PQSQPQLSNVTTAT) the composition is skewed to polar residues. Positions 306-320 (LRPFFDEWPGRRDSW) are enriched in basic and acidic residues. Polar residues predominate over residues 329 to 340 (NQTSFSTTQLSI).

It belongs to the GRF family.

It localises to the nucleus. Its function is as follows. Transcription activator that plays a regulatory role in gibberellin-induced stem elongation. This Oryza sativa subsp. japonica (Rice) protein is Growth-regulating factor 5 (GRF5).